The chain runs to 261 residues: Indole-3-glycerol phosphate synthase (261 aa).

The protein belongs to the TrpC family.

It carries out the reaction 1-(2-carboxyphenylamino)-1-deoxy-D-ribulose 5-phosphate + H(+) = (1S,2R)-1-C-(indol-3-yl)glycerol 3-phosphate + CO2 + H2O. It participates in amino-acid biosynthesis; L-tryptophan biosynthesis; L-tryptophan from chorismate: step 4/5. This is Indole-3-glycerol phosphate synthase from Burkholderia thailandensis (strain ATCC 700388 / DSM 13276 / CCUG 48851 / CIP 106301 / E264).